The sequence spans 119 residues: MDYEFLRDLTGQVLVKFSMGHEVIGHWLNEEIKGDLVKLDHIETAADGVRGSERQWQLPGHEYTLWLDGEEVMVRANQLDLDGDEMEEGMNYYDEESLCLCGLEDFLLVLKGYRAFITQ.

Belongs to the UPF0231 family.

The polypeptide is UPF0231 protein YPTB0717 (Yersinia pseudotuberculosis serotype I (strain IP32953)).